Consider the following 730-residue polypeptide: Replication restart protein PriA (730 aa).

A Helicase ATP-binding domain is found at 212-378 (LLFHSGFNVW…QNGKYQHLVL (167 aa)). 225 to 232 (GVTGSGKT) contributes to the ATP binding site. Positions 321–324 (DEEH) match the DEAH box motif. Residues cysteine 437, cysteine 440, cysteine 446, cysteine 449, cysteine 464, cysteine 467, cysteine 477, and cysteine 480 each coordinate Zn(2+). The region spanning 472 to 640 (TIPRQCGDCG…LPPFTFQALI (169 aa)) is the Helicase C-terminal domain.

It belongs to the helicase family. PriA subfamily. In terms of assembly, component of the replication restart primosome. Zn(2+) is required as a cofactor.

The enzyme catalyses Couples ATP hydrolysis with the unwinding of duplex DNA by translocating in the 3'-5' direction.. It carries out the reaction ATP + H2O = ADP + phosphate + H(+). Initiates the restart of stalled replication forks, which reloads the replicative helicase on sites other than the origin of replication. Recognizes and binds to abandoned replication forks and remodels them to uncover a helicase loading site. Promotes assembly of the primosome at these replication forks. The chain is Replication restart protein PriA from Haemophilus influenzae (strain ATCC 51907 / DSM 11121 / KW20 / Rd).